The following is a 193-amino-acid chain: Acyl carrier protein phosphodiesterase (193 aa).

It belongs to the AcpH family.

It catalyses the reaction holo-[ACP] + H2O = apo-[ACP] + (R)-4'-phosphopantetheine + H(+). Its function is as follows. Converts holo-ACP to apo-ACP by hydrolytic cleavage of the phosphopantetheine prosthetic group from ACP. This chain is Acyl carrier protein phosphodiesterase, found in Escherichia coli O127:H6 (strain E2348/69 / EPEC).